A 1191-amino-acid polypeptide reads, in one-letter code: Protogenin (1191 aa).

The N-terminal stretch at 1–23 (MAPPVRPGMLPLLLLLLLPPLGS) is a signal peptide. 4 Ig-like domains span residues 24 to 124 (VPGV…AHLT), 126 to 216 (STIS…ASLT), 229 to 316 (PTII…ATLT), and 321 to 405 (PSFV…ARLT). Residues 24–943 (VPGVWSFSEL…YYHLDQKSMT (920 aa)) lie on the Extracellular side of the membrane. 2 disulfide bridges follow: C54–C107 and C150–C199. N-linked (GlcNAc...) asparagine glycosylation is present at N237. Cystine bridges form between C250/C298 and C342/C389. Fibronectin type-III domains lie at 415–509 (APYN…TLED), 511–607 (PLRP…TPKA), 612–711 (APKS…VRDR), 718–811 (PPHH…TLPE), and 816–911 (PPVG…VLPK). N624 carries an N-linked (GlcNAc...) asparagine glycan. The helical transmembrane segment at 944 to 964 (GIAVGVGIALTCILICVLILI) threads the bilayer. Residues 965–1191 (YRSKARKSSA…LRYAAEGFPV (227 aa)) lie on the Cytoplasmic side of the membrane. Disordered stretches follow at residues 975-1010 (SKTA…ETAE) and 1079-1191 (ISDE…GFPV). Polar residues predominate over residues 977-990 (TAQSGTQPLSQASA). The span at 1104–1132 (DTEHSANSEGSHETGDSGRFSHESNDEIH) shows a compositional bias: basic and acidic residues. Composition is skewed to polar residues over residues 1135 to 1146 (SVISSTPPTSNP) and 1171 to 1180 (EQTSAPQTSA).

The protein belongs to the immunoglobulin superfamily. DCC family. From mid-gastrulation to early somite stages, restricted to posterior neural plate and mesoderm with an anterior limit at the level of the rhombencephalon. Posterior restriction is progressively lost during somitogenesis. Expression is maintained in the neural tube and paraxial mesoderm during this process. As development proceeds, further restricted to the dorsal parts of the spinal cord and somites. In parallel, expression progresses caudally during axis elongation.

The protein localises to the membrane. May play a role in anteroposterior axis elongation. The protein is Protogenin of Mus musculus (Mouse).